Consider the following 111-residue polypeptide: PHD finger-like domain-containing protein 5A (111 aa).

It belongs to the PHF5 family.

The chain is PHD finger-like domain-containing protein 5A from Drosophila melanogaster (Fruit fly).